The primary structure comprises 472 residues: Argininosuccinate lyase (472 aa).

Belongs to the lyase 1 family. Argininosuccinate lyase subfamily.

Its subcellular location is the cytoplasm. It carries out the reaction 2-(N(omega)-L-arginino)succinate = fumarate + L-arginine. Its pathway is amino-acid biosynthesis; L-arginine biosynthesis; L-arginine from L-ornithine and carbamoyl phosphate: step 3/3. This Synechococcus sp. (strain CC9902) protein is Argininosuccinate lyase.